The sequence spans 587 residues: Hatching enzyme (587 aa).

The signal sequence occupies residues Met1–Thr18. Positions Val19–Pro166 are cleaved as a propeptide — activation peptide. N-linked (GlcNAc...) asparagine glycans are attached at residues Asn64, Asn126, and Asn141. The Cysteine switch motif lies at Pro157–Val164. Cys159 and His283 together coordinate Zn(2+). Residue Glu284 is part of the active site. Zn(2+)-binding residues include His287 and His293. A disordered region spans residues Leu325–Gly382. The segment covering Thr334–Ser371 has biased composition (low complexity). Cys380 and Cys582 form a disulfide bridge. Hemopexin repeat units lie at residues Ser381–Phe422, Pro425–Leu468, Pro469–Val513, and His518–Cys570. N-linked (GlcNAc...) asparagine glycosylation is present at Asn584.

Belongs to the peptidase M10A family. The cofactor is Zn(2+).

The enzyme catalyses Hydrolysis of proteins of the fertilization envelope and dimethylcasein.. Allows the sea urchin to digest the protective envelope derived from the egg extracellular matrix; thus allowing the sea urchin to swim freely. This chain is Hatching enzyme, found in Paracentrotus lividus (Common sea urchin).